A 218-amino-acid chain; its full sequence is Calcineurin B-like protein 5 (218 aa).

EF-hand domains are found at residues 35–69 (EVEALYDLFRKLSNSIIKDGLIHKEEFHLALFRNK), 70–105 (KTNLFVDRVFDLFDQKGNGVIEFDEFVRSLSVFHPD), 107–142 (PEEQKAGFAFKLYDLRQTGFIERHELKEMVLALLDE), and 151–186 (AVEMIVDRTFDQADTKGDERIDQEEWNEFVKNNPYV).

Belongs to the calcineurin regulatory subunit family. Homodimer. As to expression, expressed at low levels in roots, shoots, culms, leaves and young spikelets.

In terms of biological role, acts as a calcium sensor. CBL proteins interact with CIPK serine-threonine protein kinases. Binding of a CBL protein to the regulatory NAF domain of a CIPK protein lead to the activation of the kinase in a calcium-dependent manner. The chain is Calcineurin B-like protein 5 (CBL5) from Oryza sativa subsp. japonica (Rice).